A 323-amino-acid chain; its full sequence is Beta-ketoacyl-[acyl-carrier-protein] synthase III (323 aa).

Catalysis depends on residues Cys-113 and His-250. An ACP-binding region spans residues 251–255 (QANRR). Asn-280 is a catalytic residue.

Belongs to the thiolase-like superfamily. FabH family. Homodimer.

The protein localises to the cytoplasm. The enzyme catalyses malonyl-[ACP] + acetyl-CoA + H(+) = 3-oxobutanoyl-[ACP] + CO2 + CoA. It participates in lipid metabolism; fatty acid biosynthesis. Its function is as follows. Catalyzes the condensation reaction of fatty acid synthesis by the addition to an acyl acceptor of two carbons from malonyl-ACP. Catalyzes the first condensation reaction which initiates fatty acid synthesis and may therefore play a role in governing the total rate of fatty acid production. Possesses both acetoacetyl-ACP synthase and acetyl transacylase activities. Its substrate specificity determines the biosynthesis of branched-chain and/or straight-chain of fatty acids. This is Beta-ketoacyl-[acyl-carrier-protein] synthase III from Rhizobium meliloti (strain 1021) (Ensifer meliloti).